A 353-amino-acid polypeptide reads, in one-letter code: UDP-N-acetylglucosamine--N-acetylmuramyl-(pentapeptide) pyrophosphoryl-undecaprenol N-acetylglucosamine transferase (353 aa).

Residues 14-16, Asn126, Arg162, Ser190, Ile243, 262-267, and Gln287 contribute to the UDP-N-acetyl-alpha-D-glucosamine site; these read TGG and ALTVSE.

This sequence belongs to the glycosyltransferase 28 family. MurG subfamily.

Its subcellular location is the cell inner membrane. It carries out the reaction di-trans,octa-cis-undecaprenyl diphospho-N-acetyl-alpha-D-muramoyl-L-alanyl-D-glutamyl-meso-2,6-diaminopimeloyl-D-alanyl-D-alanine + UDP-N-acetyl-alpha-D-glucosamine = di-trans,octa-cis-undecaprenyl diphospho-[N-acetyl-alpha-D-glucosaminyl-(1-&gt;4)]-N-acetyl-alpha-D-muramoyl-L-alanyl-D-glutamyl-meso-2,6-diaminopimeloyl-D-alanyl-D-alanine + UDP + H(+). Its pathway is cell wall biogenesis; peptidoglycan biosynthesis. Functionally, cell wall formation. Catalyzes the transfer of a GlcNAc subunit on undecaprenyl-pyrophosphoryl-MurNAc-pentapeptide (lipid intermediate I) to form undecaprenyl-pyrophosphoryl-MurNAc-(pentapeptide)GlcNAc (lipid intermediate II). In Vibrio atlanticus (strain LGP32) (Vibrio splendidus (strain Mel32)), this protein is UDP-N-acetylglucosamine--N-acetylmuramyl-(pentapeptide) pyrophosphoryl-undecaprenol N-acetylglucosamine transferase.